The primary structure comprises 270 residues: Putative pyruvate, phosphate dikinase regulatory protein 2 (270 aa).

151–158 (GVSRTSKT) contacts ADP.

This sequence belongs to the pyruvate, phosphate/water dikinase regulatory protein family. PDRP subfamily.

It catalyses the reaction N(tele)-phospho-L-histidyl/L-threonyl-[pyruvate, phosphate dikinase] + ADP = N(tele)-phospho-L-histidyl/O-phospho-L-threonyl-[pyruvate, phosphate dikinase] + AMP + H(+). The enzyme catalyses N(tele)-phospho-L-histidyl/O-phospho-L-threonyl-[pyruvate, phosphate dikinase] + phosphate + H(+) = N(tele)-phospho-L-histidyl/L-threonyl-[pyruvate, phosphate dikinase] + diphosphate. Functionally, bifunctional serine/threonine kinase and phosphorylase involved in the regulation of the pyruvate, phosphate dikinase (PPDK) by catalyzing its phosphorylation/dephosphorylation. This is Putative pyruvate, phosphate dikinase regulatory protein 2 from Listeria monocytogenes serotype 4b (strain F2365).